The sequence spans 87 residues: MANSAQARKRARQSVKQRAHNASLRTAFRTAVKKVLKAVEAGDKAAAQAVYQESVKVIDRIADKGVFHKNKAARHKSRLSAKVKALA.

The disordered stretch occupies residues 1-22 (MANSAQARKRARQSVKQRAHNA). The span at 7–19 (ARKRARQSVKQRA) shows a compositional bias: basic residues.

Belongs to the bacterial ribosomal protein bS20 family.

In terms of biological role, binds directly to 16S ribosomal RNA. This chain is Small ribosomal subunit protein bS20, found in Neisseria gonorrhoeae (strain ATCC 700825 / FA 1090).